Here is a 395-residue protein sequence, read N- to C-terminus: Acid ceramidase (395 aa).

A signal peptide spans 1 to 21 (MLGRSRLALVLLAAAVSCAVA). A disulfide bridge links Cys31 with Cys340. Cys143 serves as the catalytic Nucleophile. N-linked (GlcNAc...) asparagine glycosylation is found at Asn173, Asn195, Asn259, Asn286, Asn342, and Asn348. Cys388 and Cys392 form a disulfide bridge.

Belongs to the acid ceramidase family. Heterodimer; disulfide-linked. The heterodimer is composed of the disulfide-linked alpha and beta chains produced by autocatalytic cleavage of the precursor. N-glycosylated. Post-translationally, proteolytically cleaved into two chains alpha and beta that remain associated via a disulfide bond. Cleavage gives rise to a conformation change that activates the enzyme. The same catalytic Cys residue mediates the autoproteolytic cleavage and subsequent hydrolysis of lipid substrates. The beta chain may undergo an additional C-terminal processing.

It localises to the lysosome. It is found in the secreted. The enzyme catalyses an N-acylsphing-4-enine + H2O = sphing-4-enine + a fatty acid. It catalyses the reaction N-dodecanoylsphing-4-enine + H2O = dodecanoate + sphing-4-enine. It carries out the reaction N-tetradecanoylsphing-4-enine + H2O = tetradecanoate + sphing-4-enine. The catalysed reaction is N-hexadecanoylsphing-4-enine + H2O = sphing-4-enine + hexadecanoate. The enzyme catalyses N-octadecanoylsphing-4-enine + H2O = sphing-4-enine + octadecanoate. It catalyses the reaction N-dodecanoyl-(4R)-hydroxysphinganine + H2O = (4R)-hydroxysphinganine + dodecanoate. It carries out the reaction N-(dodecanoyl)-sphinganine + H2O = dodecanoate + sphinganine. The catalysed reaction is N-(acetyl)-sphing-4-enine + H2O = sphing-4-enine + acetate. The enzyme catalyses N-(hexanoyl)sphing-4-enine + H2O = hexanoate + sphing-4-enine. It catalyses the reaction N-octanoylsphing-4-enine + H2O = octanoate + sphing-4-enine. It carries out the reaction N-(9Z-octadecenoyl)-sphing-4-enine + H2O = sphing-4-enine + (9Z)-octadecenoate. The catalysed reaction is N-dodecanoylethanolamine + H2O = dodecanoate + ethanolamine. It participates in lipid metabolism; sphingolipid metabolism. Its function is as follows. Lysosomal ceramidase that hydrolyzes sphingolipid ceramides into sphingosine and free fatty acids at acidic pH. Ceramides, sphingosine, and its phosphorylated form sphingosine-1-phosphate are bioactive lipids that mediate cellular signaling pathways regulating several biological processes including cell proliferation, apoptosis and differentiation. Has a higher catalytic efficiency towards C12-ceramides versus other ceramides. Also catalyzes the reverse reaction allowing the synthesis of ceramides from fatty acids and sphingosine. For the reverse synthetic reaction, the natural sphingosine D-erythro isomer is more efficiently utilized as a substrate compared to D-erythro-dihydrosphingosine and D-erythro-phytosphingosine, while the fatty acids with chain lengths of 12 or 14 carbons are the most efficiently used. Also has an N-acylethanolamine hydrolase activity. By regulating the levels of ceramides, sphingosine and sphingosine-1-phosphate in the epidermis, mediates the calcium-induced differentiation of epidermal keratinocytes. Also indirectly regulates tumor necrosis factor/TNF-induced apoptosis. By regulating the intracellular balance between ceramides and sphingosine, in adrenocortical cells, probably also acts as a regulator of steroidogenesis. The sequence is that of Acid ceramidase from Macaca fascicularis (Crab-eating macaque).